A 446-amino-acid polypeptide reads, in one-letter code: Exodeoxyribonuclease 7 large subunit (446 aa).

The protein belongs to the XseA family. Heterooligomer composed of large and small subunits.

It is found in the cytoplasm. The catalysed reaction is Exonucleolytic cleavage in either 5'- to 3'- or 3'- to 5'-direction to yield nucleoside 5'-phosphates.. Its function is as follows. Bidirectionally degrades single-stranded DNA into large acid-insoluble oligonucleotides, which are then degraded further into small acid-soluble oligonucleotides. This Streptococcus thermophilus (strain ATCC BAA-250 / LMG 18311) protein is Exodeoxyribonuclease 7 large subunit.